The primary structure comprises 472 residues: 2-amino-4-ketopentanoate thiolase beta subunit (472 aa).

Position 102 is an N6-(pyridoxal phosphate)lysine (lysine 102). Residues asparagine 128 and 238 to 242 each bind pyridoxal 5'-phosphate; that span reads AGGGN.

Belongs to the threonine synthase family. As to quaternary structure, heterodimer with OrtA. Requires pyridoxal 5'-phosphate as cofactor.

It catalyses the reaction D-alanine + acetyl-CoA = (2R)-2-amino-4-oxopentanoate + CoA. Involved in the ornithine fermentation pathway. Catalyzes the thiolytic cleavage of 2-amino-4-ketopentanoate (AKP) with coenzyme A (CoA) to form acetyl-CoA and alanine. It is strictly specific for AKP. This chain is 2-amino-4-ketopentanoate thiolase beta subunit, found in Unknown prokaryotic organism.